The following is a 263-amino-acid chain: Endonuclease 8 (263 aa).

Proline 2 acts as the Schiff-base intermediate with DNA in catalysis. Glutamate 3 functions as the Proton donor in the catalytic mechanism. The Proton donor; for beta-elimination activity role is filled by lysine 53. DNA is bound by residues glutamine 70, arginine 125, and asparagine 169. Residues 229-263 (KVFHRDGEACERCGGIIEKTTLSSRPFYWCPHCQK) form an FPG-type zinc finger. The Proton donor; for delta-elimination activity role is filled by arginine 253.

Belongs to the FPG family. Zn(2+) serves as cofactor.

It carries out the reaction 2'-deoxyribonucleotide-(2'-deoxyribose 5'-phosphate)-2'-deoxyribonucleotide-DNA = a 3'-end 2'-deoxyribonucleotide-(2,3-dehydro-2,3-deoxyribose 5'-phosphate)-DNA + a 5'-end 5'-phospho-2'-deoxyribonucleoside-DNA + H(+). Involved in base excision repair of DNA damaged by oxidation or by mutagenic agents. Acts as a DNA glycosylase that recognizes and removes damaged bases. Has a preference for oxidized pyrimidines, such as thymine glycol, 5,6-dihydrouracil and 5,6-dihydrothymine. Has AP (apurinic/apyrimidinic) lyase activity and introduces nicks in the DNA strand. Cleaves the DNA backbone by beta-delta elimination to generate a single-strand break at the site of the removed base with both 3'- and 5'-phosphates. This chain is Endonuclease 8, found in Salmonella arizonae (strain ATCC BAA-731 / CDC346-86 / RSK2980).